The primary structure comprises 808 residues: Protein NLP5 (808 aa).

A compositionally biased stretch (polar residues) spans 56–68 (PTQDTSNSLSQMY). Residues 56-83 (PTQDTSNSLSQMYGQDCPERSSLEDQNQ) form a disordered region. The RWP-RK domain maps to 536–617 (NRVTEKKRTK…IDSVEGVSGH (82 aa)). The tract at residues 660–680 (SPGSSCSHSSSCSSETQVIKE) is disordered. Positions 663-673 (SSCSHSSSCSS) are enriched in low complexity. The PB1 domain maps to 710 to 793 (FLRVKVSYEE…QTIKLLLQLS (84 aa)).

It localises to the nucleus. Its function is as follows. Probable transcription factor. The protein is Protein NLP5 (NLP5) of Arabidopsis thaliana (Mouse-ear cress).